The chain runs to 264 residues: CD320 antigen (264 aa).

Residues 1–28 (MARCGAGRAAALGLVLRLLLGLRTGPEA) form the signal peptide. One can recognise an LDL-receptor class A 1 domain in the interval 50-87 (SCPTDTFKCLTSGYCVPLSWRCDGDRDCSDGSDEEECR). Intrachain disulfides connect Cys-51-Cys-64, Cys-58-Cys-77, and Cys-71-Cys-86. Residues Trp-69, Asp-72, Asp-74, Asp-76, Asp-82, and Glu-83 each contribute to the Ca(2+) site. The N-linked (GlcNAc...) asparagine glycan is linked to Asn-122. In terms of domain architecture, LDL-receptor class A 2 spans 127–164 (PCQEGELRCILDDVCIPHTWRCDGHPDCPDSSDELSCD). 3 disulfide bridges follow: Cys-128-Cys-141, Cys-135-Cys-154, and Cys-148-Cys-163. The Ca(2+) site is built by Trp-146, Asp-149, His-151, Asp-153, Asp-159, and Glu-160. N-linked (GlcNAc...) asparagine glycosylation is present at Asn-195. Residues 213–233 (VIAAAGVLSAILVSATILILL) traverse the membrane as a helical segment.

Interacts (via LDL-receptor class A domains) with TCN2.

The protein localises to the cell membrane. Functionally, receptor for transcobalamin saturated with cobalamin (TCbl). Plays an important role in cobalamin uptake. Plasma membrane protein that is expressed on follicular dendritic cells (FDC) and mediates interaction with germinal center B cells. Functions as a costimulator to promote B cell responses to antigenic stimuli; promotes B cell differentiation and proliferation. Germinal center-B (GC-B) cells differentiate into memory B-cells and plasma cells (PC) through interaction with T-cells and follicular dendritic cells (FDC). CD320 augments the proliferation of PC precursors generated by IL-10. The protein is CD320 antigen (Cd320) of Rattus norvegicus (Rat).